Here is a 350-residue protein sequence, read N- to C-terminus: Histidinol-phosphate aminotransferase 1 (350 aa).

Position 211 is an N6-(pyridoxal phosphate)lysine (K211).

It belongs to the class-II pyridoxal-phosphate-dependent aminotransferase family. Histidinol-phosphate aminotransferase subfamily. In terms of assembly, homodimer. Pyridoxal 5'-phosphate serves as cofactor.

It catalyses the reaction L-histidinol phosphate + 2-oxoglutarate = 3-(imidazol-4-yl)-2-oxopropyl phosphate + L-glutamate. The protein operates within amino-acid biosynthesis; L-histidine biosynthesis; L-histidine from 5-phospho-alpha-D-ribose 1-diphosphate: step 7/9. The sequence is that of Histidinol-phosphate aminotransferase 1 from Trichormus variabilis (strain ATCC 29413 / PCC 7937) (Anabaena variabilis).